We begin with the raw amino-acid sequence, 197 residues long: uncharacterized protein (197 aa).

The chain crosses the membrane as a helical span at residues 150-172 (SLKLNTTLPMFALNLICLLRSIL).

The protein localises to the membrane. This is an uncharacterized protein from Saccharomyces cerevisiae (strain ATCC 204508 / S288c) (Baker's yeast).